We begin with the raw amino-acid sequence, 343 residues long: RNA-binding protein 43 (343 aa).

Residues 15 to 90 (RTVVVSGLPV…PRLTVSHFSE (76 aa)) form the RRM domain.

This Mus musculus (Mouse) protein is RNA-binding protein 43 (Rbm43).